The chain runs to 597 residues: Hydrogenase-1 large chain (597 aa).

Ni(2+)-binding residues include cysteine 76, cysteine 79, cysteine 576, and cysteine 579.

The protein belongs to the [NiFe]/[NiFeSe] hydrogenase large subunit family. In terms of assembly, heterodimer of a large and a small subunit. Ni(2+) is required as a cofactor.

Its subcellular location is the cell membrane. The catalysed reaction is H2 + A = AH2. In Citrobacter freundii, this protein is Hydrogenase-1 large chain (hyaB).